The following is a 222-amino-acid chain: Putative RING finger protein ORF118 (222 aa).

The RING-type zinc finger occupies 78–114 (CCICMAKNNRKEALPCQHNVCRDCYYKPMRNNCPVCN). The tract at residues 184 to 222 (IENRIHNNNNNNYDENNPDDLPVIHPPRRRHRQTAHISI) is disordered. The span at 189–198 (HNNNNNNYDE) shows a compositional bias: low complexity. The span at 209-222 (PPRRRHRQTAHISI) shows a compositional bias: basic residues.

This is Putative RING finger protein ORF118 from Magallana gigas (Pacific oyster).